Reading from the N-terminus, the 370-residue chain is Acyl-CoA:lysophosphatidylglycerol acyltransferase 1 (370 aa).

A helical transmembrane segment spans residues 22–42 (FAFMVANNLVAIPSYICYVII). The HXXXXD motif signature appears at 101–106 (HQATGD). The helical transmembrane segment at 342–362 (MWIFLIQSFAFLSGYLWYHII) threads the bilayer.

This sequence belongs to the 1-acyl-sn-glycerol-3-phosphate acyltransferase family. In terms of tissue distribution, ubiquitous. Expressed in heart, kidney, liver, skin, intestine, and thymus. Highest expression is detected in brain and testis.

Its subcellular location is the endoplasmic reticulum membrane. It catalyses the reaction a 2-acyl-sn-glycero-3-phosphoethanolamine + octadecanoyl-CoA = 1-octadecanoyl-2-acyl-sn-glycero-3-phosphoethanolamine + CoA. The catalysed reaction is 2-(9Z-octadecenoyl)-sn-glycero-3-phosphoethanolamine + octadecanoyl-CoA = 1-octadecanoyl-2-(9Z-octadecenoyl)-sn-glycero-3-phosphoethanolamine + CoA. It carries out the reaction a 2-acyl-sn-glycero-3-phosphoethanolamine + hexadecanoyl-CoA = 1-hexadecanoyl-2-acyl-sn-glycero-3-phosphoethanolamine + CoA. The enzyme catalyses 2-(9Z-octadecenoyl)-sn-glycero-3-phosphoethanolamine + hexadecanoyl-CoA = 1-hexadecanoyl-2-(9Z-octadecenoyl)-sn-glycero-3-phosphoethanolamine + CoA. It catalyses the reaction 1-tetradecanoyl-sn-glycero-3-phospho-(1'-sn-glycerol) + hexadecanoyl-CoA = 1-tetradecanoyl-2-hexadecanoyl-sn-glycero-3-phospho-(1'-sn-glycerol) + CoA. The catalysed reaction is 1-hexadecanoyl-sn-glycero-3-phospho-(1'-sn-glycerol) + dodecanoyl-CoA = 1-hexadecanoyl-2-dodecanoyl-sn-glycero-3-phospho-(1'-sn-glycerol) + CoA. It carries out the reaction 1-hexadecanoyl-sn-glycero-3-phospho-(1'-sn-glycerol) + hexadecanoyl-CoA = 1,2-dihexadecanoyl-sn-glycero-3-phospho-(1'-sn-glycerol) + CoA. The enzyme catalyses 1-hexadecanoyl-sn-glycero-3-phospho-(1'-sn-glycerol) + octadecanoyl-CoA = 1-hexadecanoyl-2-octadecanoyl-sn-glycero-3-phospho-(1'-sn-glycerol) + CoA. It catalyses the reaction 1-octadecanoyl-sn-glycero-3-phospho-(1'-sn-glycerol) + hexadecanoyl-CoA = 1-octadecanoyl-2-hexadecanoyl-sn-glycero-3-phospho-(1'-sn-glycerol) + CoA. The catalysed reaction is 1-(9Z-octadecenoyl)-sn-glycero-3-phospho-(1'-sn-glycerol) + dodecanoyl-CoA = 1-(9Z-octadecenoyl)-2-dodecanoyl-sn-glycero-3-phospho-(1'-sn-glycerol) + CoA. It carries out the reaction 1-hexadecanoyl-sn-glycero-3-phospho-(1'-sn-glycerol) + (9Z)-octadecenoyl-CoA = 1-hexadecanoyl-2-(9Z-octadecenoyl)-sn-glycero-3-phospho-(1'-sn-glycerol) + CoA. The enzyme catalyses 1-(9Z-octadecenoyl)-sn-glycero-3-phospho-(1'-sn-glycerol) + hexadecanoyl-CoA = 1-(9Z-octadecenoyl)-2-hexadecanoyl-sn-glycero-3-phospho-(1'-sn-glycerol) + CoA. It catalyses the reaction 1-(9Z-octadecenoyl)-sn-glycero-3-phospho-(1'-sn-glycerol) + (9Z)-octadecenoyl-CoA = 1,2-di-(9Z-octadecenoyl)-sn-glycero-3-phospho-(1'-sn-glycerol) + CoA. The catalysed reaction is a 2-acylglycerol + an acyl-CoA = a 1,2-diacylglycerol + CoA. It carries out the reaction a 2-acylglycerol + hexadecanoyl-CoA = a 1-hexadecanoyl-2-acylglycerol + CoA. The enzyme catalyses a 1-acylglycerol + hexadecanoyl-CoA = an hexadecanoyl-acylglycerol + CoA. It catalyses the reaction a 2-acyl-sn-glycero-3-phosphocholine + an acyl-CoA = a 1,2-diacyl-sn-glycero-3-phosphocholine + CoA. The catalysed reaction is 2-(9Z-octadecenoyl)-sn-glycero-3-phosphocholine + octadecanoyl-CoA = 1-octadecanoyl-2-(9Z-octadecenoyl)-sn-glycero-3-phosphocholine + CoA. It carries out the reaction 2-(9Z,12Z-octadecadienoyl)-sn-glycero-3-phosphocholine + octadecanoyl-CoA = 1-octadecanoyl-2-(9Z,12Z)-octadecadienoyl-sn-glycero-3-phosphocholine + CoA. The enzyme catalyses 2-(5Z,8Z,11Z,14Z)-eicosatetraenoyl-sn-glycero-3-phosphocholine + octadecanoyl-CoA = 1-octadecanoyl-2-(5Z,8Z,11Z,14Z-eicosatetraenoyl)-sn-glycero-3-phosphocholine + CoA. It catalyses the reaction 2-(9Z-octadecenoyl)-sn-glycero-3-phosphocholine + hexadecanoyl-CoA = 1-hexadecanoyl-2-(9Z-octadecenoyl)-sn-glycero-3-phosphocholine + CoA. The catalysed reaction is 2-(9Z-octadecenoyl)-sn-glycero-3-phospho-L-serine + hexadecanoyl-CoA = 1-hexadecanoyl-2-(9Z-octadecenoyl)-sn-glycero-3-phospho-L-serine + CoA. It carries out the reaction 2-(4Z,7Z,10Z,13Z,16Z,19Z-docosahexaenoyl)-sn-glycero-3-phosphocholine + octadecanoyl-CoA = 1-octadecanoyl-2-(4Z,7Z,10Z,13Z,16Z,19Z-docosahexaenoyl)-sn-glycero-3-phosphocholine + CoA. The enzyme catalyses 1-(9Z-octadecenoyl)-sn-glycero-3-phospho-L-serine + octadecanoyl-CoA = 1-(9Z-octadecenoyl)-2-octadecanoyl-sn-glycero-3-phospho-L-serine + CoA. It catalyses the reaction a 2-acyl-sn-glycero-3-phosphoethanolamine + a fatty acyl-CoA = a 1,2-diacyl-sn-glycero-3-phosphoethanolamine + CoA. Functionally, lysophospholipid acyltransferase involved in fatty acyl chain remodeling of glycerophospholipids in the endoplasmic reticulum membrane. Selectively catalyzes the transfer and esterification of saturated long-chain fatty acids from acyl-CoA to the sn-1 position of 1-lyso-2-acyl phosphatidylethanolamines (1-lyso-PE, LPE), with a preference for stearoyl CoA over palmitoyl CoA as acyl donor. Acts in concert with an unknown phospholipase A1 to convert palmitate PE species into stearate ones. Provides substrates to the PE methylation pathway, controlling stearate/palmitate composition of PE and phosphatidylcholine (PC) species with an overall impact on de novo hepatic lipid synthesis, body fat content and life span. Can acylate lysophosphatidylglycerols (LPG) using various saturated fatty acyl-CoAs as acyl donors. Can also acylate monoacylglycerols with a preference for 2-monoacylglycerols over 1-monoacylglycerols. Has no activity toward lysophosphatidic acids (LPA) and lysophosphatidylcholines (LPC). This chain is Acyl-CoA:lysophosphatidylglycerol acyltransferase 1, found in Mus musculus (Mouse).